The primary structure comprises 967 residues: A disintegrin and metalloproteinase with thrombospondin motifs 1 (967 aa).

Disordered regions lie at residues 1–27 and 192–250; these read MQRA…APGS and GDVG…SIRK. Residues 1 to 49 form the signal peptide; sequence MQRAVPEGFGRRKLGSDMGNAERAPGSRSFGPVPTLLLLAAALLAVSDA. Residues 50–252 constitute a propeptide that is removed on maturation; the sequence is LGRPSEEDEE…TGTGSIRKKR (203 aa). Positions 196 to 203 match the Cysteine switch motif; that stretch reads GTCGVVDD. Residue Cys-198 coordinates Zn(2+). Residues 203-212 show a composition bias toward basic and acidic residues; sequence DEPRPTGKAE. The segment covering 213–226 has biased composition (acidic residues); the sequence is TEDEDEGTEGEDEG. Residues 258–467 enclose the Peptidase M12B domain; that stretch reads RYVETMLVAD…GHGECLMDKP (210 aa). Residues Glu-261, Asp-344, and Asp-351 each contribute to the Ca(2+) site. Intrachain disulfides connect Cys-333–Cys-385, Cys-362–Cys-367, Cys-379–Cys-462, and Cys-417–Cys-446. His-401 contributes to the Zn(2+) binding site. Glu-402 is a catalytic residue. Residues His-405 and His-411 each contribute to the Zn(2+) site. Positions 462 and 465 each coordinate Ca(2+). Residues 476–559 form the Disintegrin domain; the sequence is DLPGTSYDAN…DRKHFDTPFH (84 aa). 4 cysteine pairs are disulfide-bonded: Cys-488–Cys-511, Cys-499–Cys-521, Cys-506–Cys-540, and Cys-534–Cys-545. Residue Asn-547 is glycosylated (N-linked (GlcNAc...) asparagine). The region spanning 559–614 is the TSP type-1 1 domain; that stretch reads HGSWGMWGPWGDCSRTCGGGVQYTMRECDNPVPKNGGKYCEGKRVRYRSCNLEDCP. 3 disulfide bridges follow: Cys-571-Cys-608, Cys-575-Cys-613, and Cys-586-Cys-598. Residues Asn-720 and Asn-764 are each glycosylated (N-linked (GlcNAc...) asparagine). The interval 725-849 is spacer; it reads KKISGSVTSA…YFVKKKKESF (125 aa). 2 TSP type-1 domains span residues 854 to 905 and 908 to 967; these read TFSA…RPCA and PCPQ…AECS.

It depends on Zn(2+) as a cofactor. The precursor is cleaved by a furin endopeptidase. In terms of processing, glycosylated. Can be O-fucosylated by POFUT2 on a serine or a threonine residue found within the consensus sequence C1-X(2)-(S/T)-C2-G of the TSP type-1 repeat domains where C1 and C2 are the first and second cysteine residue of the repeat, respectively. Fucosylated repeats can then be further glycosylated by the addition of a beta-1,3-glucose residue by the glucosyltransferase, B3GALTL. Fucosylation mediates the efficient secretion of ADAMTS family members. Can also be C-glycosylated with one or two mannose molecules on tryptophan residues within the consensus sequence W-X-X-W of the TPRs, and N-glycosylated. These other glycosylations can also facilitate secretion.

The protein localises to the secreted. It localises to the extracellular space. Its subcellular location is the extracellular matrix. Metalloprotease which cleaves aggrecan, a cartilage proteoglycan, at the '1938-Glu-|-Leu-1939' site (within the chondroitin sulfate attachment domain), and may be involved in its turnover. Also cleaves COMP. Has angiogenic inhibitor activity. May play a critical role in follicular rupture. The protein is A disintegrin and metalloproteinase with thrombospondin motifs 1 (ADAMTS1) of Homo sapiens (Human).